A 165-amino-acid chain; its full sequence is Nucleotide-binding protein P9301_05061 (165 aa).

The protein belongs to the YajQ family.

Functionally, nucleotide-binding protein. The chain is Nucleotide-binding protein P9301_05061 from Prochlorococcus marinus (strain MIT 9301).